The sequence spans 597 residues: Electron transfer flavoprotein-ubiquinone oxidoreductase, mitochondrial (597 aa).

Position 53 to 67 (53 to 67 (VVIVGGGPSGLSAAI)) interacts with FAD. The stretch at 91-112 (IGGHTLSGAVIETRALDELIPN) is an intramembrane region. 2 residues coordinate a ubiquinone: glycine 285 and glycine 286. An intramembrane segment occupies 409-426 (IDPATYDKNIRDTYVVKE). 4 residues coordinate [4Fe-4S] cluster: cysteine 540, cysteine 566, cysteine 569, and cysteine 572. A 4Fe-4S ferredoxin-type domain is found at 557 to 586 (KRLQINAQNCIHCKTCDIKDPQQNINWVTP).

Belongs to the ETF-QO/FixC family. As to quaternary structure, monomer. The cofactor is [4Fe-4S] cluster. FAD is required as a cofactor.

It is found in the mitochondrion inner membrane. The enzyme catalyses a ubiquinone + reduced [electron-transfer flavoprotein] = a ubiquinol + oxidized [electron-transfer flavoprotein] + H(+). In terms of biological role, accepts electrons from ETF and reduces ubiquinone. The sequence is that of Electron transfer flavoprotein-ubiquinone oxidoreductase, mitochondrial (let-721) from Caenorhabditis elegans.